Reading from the N-terminus, the 1003-residue chain is MFVVLFCRWLNGFSQHRERLYKFEDEAVQRRRRFRVHSEESEELNDHESYSETDICTQLLASSADVTCHINVDLVNQNRFYFFVKQRNKKENSTNEEEEISSQEINTSTQNEETEVNLVFASAEDNGGVASNFDISDALMVTSNISEVSKLPETLCEEGETVQQKSVVNENDHSNEDDEQSLQSQDGSRCSDEDMNSCVSASDEEDVESQDDSFHVNDATEESIDSVSSIESQEAEESATEDLASCHSNDDKNEKDVLVDEDTSKYDNLPVEMRSAKEGEESEGTIDSSVSSSTSSSSTGDDGDDSATSYDSEDIEIQMFEYDLGTACASASISIPRPSIIPRNNKKTEVNANEERLDDLSVSPGRSDSPGGGGGGHSDSFQDPMDPGEQLGSDDEEQEDPRDYKRGGYHPVNIGDVFNARYHVIRKLGWGHFSTVWLAWDTQDKRFVAMKIVKSAEHYTEAALDEIKLLLSVRSADPNDIGCHKVVQLLDEFTVTGINGQHVAMVFEVLGCNLLKLIIRSNYRGLHLEQVRKICRQVLEALGYMHEKCGIIHTDIKPENVLITMSREEIKIMAQHAVVARKMNMKMSGSAVSTAPDHLVKMAQENMTKNKKKKMKKKAKKQREKLEAELAGLEGLKMDANGLQEAYNNAPELENFNASQVEDVTMEDTVNENGNRNKVEIRSPDRFDRTTLTPFSDPESKFGDLASPSAEYLSSPMSQLPPGGILPAPPVGPNIGDPYCDIDVKIADLGNACWVNHHYTDDIQTRQYRALEVLIGSGYGPPADIWSTACMAFELATGDYLFEPHQGDNYSRDEDHLAHISELLGAIPPSIYKKGKHWREFFHKNGHLLHIHQLKPWSLYEVLRQKYEWSHEDAQQFESFLRPMLDFDQEKRSTAKIALKHPFLLPFGGRAPKSDCPPELLSKMFPDGLIPEPFDGNEHQEVYRDENDSRSASERSANSRSAGGSDDDDEEEFNMNRPGPSGVITNNETTDISDIERFQLDLQ.

3 disordered regions span residues 92-112, 169-309, and 337-408; these read NSTN…TQNE, NEND…SATS, and RPSI…KRGG. The segment covering 202 to 211 has biased composition (acidic residues); the sequence is SDEEDVESQD. The segment covering 248–265 has biased composition (basic and acidic residues); the sequence is SNDDKNEKDVLVDEDTSK. The segment covering 285–300 has biased composition (low complexity); the sequence is TIDSSVSSSTSSSSTG. The span at 346-359 shows a compositional bias: basic and acidic residues; it reads KKTEVNANEERLDD. The 483-residue stretch at 422 to 904 folds into the Protein kinase domain; the sequence is YHVIRKLGWG…AKIALKHPFL (483 aa). ATP contacts are provided by residues 428 to 436 and Lys451; that span reads LGWGHFSTV. Asp555 (proton acceptor) is an active-site residue. Positions 927-1003 are disordered; sequence DGLIPEPFDG…DIERFQLDLQ (77 aa). Over residues 936–953 the composition is skewed to basic and acidic residues; the sequence is GNEHQEVYRDENDSRSAS. The segment covering 954–964 has biased composition (low complexity); the sequence is ERSANSRSAGG. Positions 983–992 are enriched in polar residues; it reads VITNNETTDI. Residues 994–1003 are compositionally biased toward basic and acidic residues; the sequence is DIERFQLDLQ.

Belongs to the protein kinase superfamily. Ser/Thr protein kinase family. As to quaternary structure, interacts with rsp-3. As to expression, predominantly coexpressed with rsp-3 in adult hermaphrodite germlines.

It carries out the reaction L-seryl-[protein] + ATP = O-phospho-L-seryl-[protein] + ADP + H(+). It catalyses the reaction L-threonyl-[protein] + ATP = O-phospho-L-threonyl-[protein] + ADP + H(+). In terms of biological role, required for embryogenesis and germline development in both adult hermaphrodites and males. SR-protein kinase (SRPK) that binds directly to and phosphorylates the RS domain of rsp-3/CeSF2 in vitro. This chain is Serine/threonine-protein kinase spk-1 (spk-1), found in Caenorhabditis elegans.